We begin with the raw amino-acid sequence, 341 residues long: tRNA N6-adenosine threonylcarbamoyltransferase (341 aa).

Positions 117 and 121 each coordinate Fe cation. Residues 139 to 143 (VVSGG), D172, G185, D189, and N278 contribute to the substrate site. Position 307 (D307) interacts with Fe cation.

The protein belongs to the KAE1 / TsaD family. The cofactor is Fe(2+).

It localises to the cytoplasm. It carries out the reaction L-threonylcarbamoyladenylate + adenosine(37) in tRNA = N(6)-L-threonylcarbamoyladenosine(37) in tRNA + AMP + H(+). In terms of biological role, required for the formation of a threonylcarbamoyl group on adenosine at position 37 (t(6)A37) in tRNAs that read codons beginning with adenine. Is involved in the transfer of the threonylcarbamoyl moiety of threonylcarbamoyl-AMP (TC-AMP) to the N6 group of A37, together with TsaE and TsaB. TsaD likely plays a direct catalytic role in this reaction. This Bacillus licheniformis (strain ATCC 14580 / DSM 13 / JCM 2505 / CCUG 7422 / NBRC 12200 / NCIMB 9375 / NCTC 10341 / NRRL NRS-1264 / Gibson 46) protein is tRNA N6-adenosine threonylcarbamoyltransferase.